Here is a 160-residue protein sequence, read N- to C-terminus: Protein FrzA (160 aa).

Positions 14 to 155 (EQEFFCFRVG…FSKLLQTARQ (142 aa)) constitute a CheW-like domain.

In terms of biological role, necessary for proper aggregation of cells to form fruiting bodies. FRZ genes define a system of signal transduction analogous to the enterobacterial chemotaxis systems. This chain is Protein FrzA (frzA), found in Myxococcus xanthus.